The following is a 358-amino-acid chain: Heme A synthase (358 aa).

8 helical membrane-spanning segments follow: residues 22-42 (IQVW…VGGA), 107-127 (VLGR…WVTK), 133-153 (IFLQ…IGWW), 172-192 (LAIH…LSRG), 208-228 (FAGW…LVAG), 269-289 (FVHR…ALYV), 302-322 (AIFL…TLLH), and 324-344 (VPIS…CFSV). Position 271 (histidine 271) interacts with heme. Heme is bound at residue histidine 332.

The protein belongs to the COX15/CtaA family. Type 2 subfamily. In terms of assembly, interacts with CtaB. Heme b is required as a cofactor.

The protein localises to the cell membrane. The catalysed reaction is Fe(II)-heme o + 2 A + H2O = Fe(II)-heme a + 2 AH2. The protein operates within porphyrin-containing compound metabolism; heme A biosynthesis; heme A from heme O: step 1/1. Catalyzes the conversion of heme O to heme A by two successive hydroxylations of the methyl group at C8. The first hydroxylation forms heme I, the second hydroxylation results in an unstable dihydroxymethyl group, which spontaneously dehydrates, resulting in the formyl group of heme A. The sequence is that of Heme A synthase from Bartonella bacilliformis (strain ATCC 35685 / KC583 / Herrer 020/F12,63).